Consider the following 97-residue polypeptide: Large ribosomal subunit protein uL23 (97 aa).

This sequence belongs to the universal ribosomal protein uL23 family. In terms of assembly, part of the 50S ribosomal subunit. Contacts protein L29, and trigger factor when it is bound to the ribosome.

In terms of biological role, one of the early assembly proteins it binds 23S rRNA. One of the proteins that surrounds the polypeptide exit tunnel on the outside of the ribosome. Forms the main docking site for trigger factor binding to the ribosome. The protein is Large ribosomal subunit protein uL23 of Sinorhizobium fredii (strain NBRC 101917 / NGR234).